We begin with the raw amino-acid sequence, 333 residues long: Cap-specific mRNA (nucleoside-2'-O-)-methyltransferase (333 aa).

Residue tyrosine 22 coordinates mRNA. 8 residues coordinate S-adenosyl-L-methionine: glutamine 39, tyrosine 66, glycine 68, glycine 72, aspartate 95, arginine 97, valine 116, and aspartate 138. Residues proline 169–valine 249 form a binding to NPH-I region. The interval proline 169 to lysine 333 is binding to Rap94. Residue lysine 175 is the For methyltransferase activity of the active site. MRNA contacts are provided by residues arginine 177–phenylalanine 180, aspartate 182, serine 205–glutamate 207, and glutamate 233. Positions serine 305–lysine 333 are disordered. Residues arginine 311–asparagine 322 show a composition bias toward low complexity. The span at arginine 323 to lysine 333 shows a compositional bias: basic residues.

This sequence belongs to the class I-like SAM-binding methyltransferase superfamily. Poxvirus/kinetoplastid 2'-O-MTase family. As to quaternary structure, interacts with poly(A) polymerase catalytic subunit OPG063. Interacts with OPG109 and OPG123; these interactions might help linking transcription to capping and polyadenylation.

It is found in the virion. The catalysed reaction is a 5'-end (N(7)-methyl 5'-triphosphoguanosine)-ribonucleoside in mRNA + S-adenosyl-L-methionine = a 5'-end (N(7)-methyl 5'-triphosphoguanosine)-(2'-O-methyl-ribonucleoside) in mRNA + S-adenosyl-L-homocysteine + H(+). Displays methyltransferase, positive regulation of the poly(A) polymerase and transcription elongation activities. Involved in the modification of both mRNA ends and in intermediate and late gene positive transcription elongation. At the mRNAs 5' end, methylates the ribose 2' OH group of the first transcribed nucleotide, thereby producing a 2'-O-methylpurine cap. At the 3' end, functions as a processivity factor which stimulates the activity of the viral poly(A) polymerase OPG063 that creates mRNA's poly(A) tail. In the presence of OPG102, OPG063 does not dissociate from the RNA allowing tail elongation to around 250 adenylates. The polypeptide is Cap-specific mRNA (nucleoside-2'-O-)-methyltransferase (OPG102) (Vaccinia virus (strain Western Reserve) (VACV)).